We begin with the raw amino-acid sequence, 400 residues long: Cytochrome b (400 aa).

The next 4 helical transmembrane spans lie at 32-52 (FGSLLALCLGIQIVTGVTLAM), 76-98 (WLIRYLHSNTASAFFFLVYLHIG), 113-133 (TWSIGTIIFIAMVATAFLGYV), and 179-199 (FFSLHFLLPFILAALVLMHLI). The heme b site is built by His82 and His96. The heme b site is built by His183 and His197. A ubiquinone is bound at residue His202. 4 helical membrane passes run 226 to 246 (YLFKDLVTIFLFMLILSIFVF), 290 to 310 (AVGVVLMFGAILIILALPYLD), 322 to 342 (LSKVAFYIFVANFLVLMQLGA), and 349 to 369 (FIVFGQLSTILYFSYFIIIIP).

This sequence belongs to the cytochrome b family. As to quaternary structure, fungal cytochrome b-c1 complex contains 10 subunits; 3 respiratory subunits, 2 core proteins and 5 low-molecular weight proteins. Cytochrome b-c1 complex is a homodimer. Heme b serves as cofactor.

The protein localises to the mitochondrion inner membrane. Functionally, component of the ubiquinol-cytochrome c reductase complex (complex III or cytochrome b-c1 complex) that is part of the mitochondrial respiratory chain. The b-c1 complex mediates electron transfer from ubiquinol to cytochrome c. Contributes to the generation of a proton gradient across the mitochondrial membrane that is then used for ATP synthesis. The chain is Cytochrome b (cob) from Epidermophyton floccosum.